A 580-amino-acid polypeptide reads, in one-letter code: Phosphatase and actin regulator 1 (580 aa).

2 positions are modified to phosphoserine: S67 and S78. A Phosphothreonine modification is found at T104. Residues 108-129 (RRRSKFANLGRIFKPWKWRKKK) carry the Nuclear localization signal motif. One copy of the RPEL 1 repeat lies at 138-163 (AALERKISMRQSREELIKRGVLKEIY). Positions 331–351 (EQRVPCSTSYHSSGLHSSDGV) are disordered. Low complexity predominate over residues 337–348 (STSYHSSGLHSS). 3 RPEL repeats span residues 422 to 447 (DSLA…PRQT), 460 to 485 (TKLT…KPRN), and 498 to 523 (RRLT…IRFS). The segment at 462 to 494 (LTRRLSQRPTAEELEQRNILKPRNEQEEQEEKR) is disordered. S467 is modified (phosphoserine). Over residues 471–494 (TAEELEQRNILKPRNEQEEQEEKR) the composition is skewed to basic and acidic residues. Position 505 is a phosphoserine (S505).

The protein belongs to the phosphatase and actin regulator family. Interacts (via RPEL repeats) with ACTA1 and PPP1CA; ACTA1 and PPP1CA compete for the same binding site. As to expression, selectively expressed in brain. High levels are found in the olfactory tubercle, nucleus accumbens core and shell, caudate-putamen, cerebral cortex, hippocampus and piriform cortex. Moderate to high levels in the olfactory bulb, arcuate and ventromedial hypothalamus, subthalamic nucleus, amygdala, lateral septum, habenula and thalamus. Low expression, if any, in substantia nigra pars compacta/pars reticula and globus pallidus (at protein level).

It is found in the cytoplasm. The protein resides in the synapse. The protein localises to the nucleus. Binds actin monomers (G actin) and plays a role in multiple processes including the regulation of actin cytoskeleton dynamics, actin stress fibers formation, cell motility and survival, formation of tubules by endothelial cells, and regulation of PPP1CA activity. Involved in the regulation of cortical neuron migration and dendrite arborization. In Rattus norvegicus (Rat), this protein is Phosphatase and actin regulator 1 (Phactr1).